The chain runs to 198 residues: Recombination protein RecR (198 aa).

A C4-type zinc finger spans residues 59–74 (CSLCCNYTDHDPCPIC). Positions 82–175 (TLLCIVEQPR…KVTRIAHGLP (94 aa)) constitute a Toprim domain.

It belongs to the RecR family.

Functionally, may play a role in DNA repair. It seems to be involved in an RecBC-independent recombinational process of DNA repair. It may act with RecF and RecO. The polypeptide is Recombination protein RecR (Desulfitobacterium hafniense (strain Y51)).